Here is a 512-residue protein sequence, read N- to C-terminus: Altronate oxidoreductase (512 aa).

26-37 provides a ligand contact to NAD(+); it reads VLQFGEGNFLRG.

This sequence belongs to the mannitol dehydrogenase family. UxaB subfamily.

The catalysed reaction is D-altronate + NAD(+) = keto-D-tagaturonate + NADH + H(+). It participates in carbohydrate metabolism; pentose and glucuronate interconversion. The protein is Altronate oxidoreductase of Halalkalibacterium halodurans (strain ATCC BAA-125 / DSM 18197 / FERM 7344 / JCM 9153 / C-125) (Bacillus halodurans).